The chain runs to 225 residues: UPF0758 protein BcerKBAB4_4299 (225 aa).

The 123-residue stretch at 103 to 225 folds into the MPN domain; sequence SIRSPEDCAS…FVSLKEKGHI (123 aa). Residues histidine 174, histidine 176, and aspartate 187 each coordinate Zn(2+). The JAMM motif signature appears at 174 to 187; that stretch reads HNHPSGDPAPSRED.

Belongs to the UPF0758 family.

In Bacillus mycoides (strain KBAB4) (Bacillus weihenstephanensis), this protein is UPF0758 protein BcerKBAB4_4299.